Consider the following 290-residue polypeptide: tRNA dimethylallyltransferase (290 aa).

11–18 (GPTASGKS) is an ATP binding site. 13 to 18 (TASGKS) is a binding site for substrate. Interaction with substrate tRNA regions lie at residues 36–39 (DSMQ) and 158–162 (QRIVR).

Belongs to the IPP transferase family. Monomer. It depends on Mg(2+) as a cofactor.

The enzyme catalyses adenosine(37) in tRNA + dimethylallyl diphosphate = N(6)-dimethylallyladenosine(37) in tRNA + diphosphate. Its function is as follows. Catalyzes the transfer of a dimethylallyl group onto the adenine at position 37 in tRNAs that read codons beginning with uridine, leading to the formation of N6-(dimethylallyl)adenosine (i(6)A). In Bartonella henselae (strain ATCC 49882 / DSM 28221 / CCUG 30454 / Houston 1) (Rochalimaea henselae), this protein is tRNA dimethylallyltransferase.